Consider the following 213-residue polypeptide: Large ribosomal subunit protein uL3 (213 aa).

N5-methylglutamine is present on Q151.

The protein belongs to the universal ribosomal protein uL3 family. In terms of assembly, part of the 50S ribosomal subunit. Forms a cluster with proteins L14 and L19. Methylated by PrmB.

Functionally, one of the primary rRNA binding proteins, it binds directly near the 3'-end of the 23S rRNA, where it nucleates assembly of the 50S subunit. The sequence is that of Large ribosomal subunit protein uL3 from Rhizobium leguminosarum bv. trifolii (strain WSM2304).